Reading from the N-terminus, the 237-residue chain is Opacity protein opA57 (237 aa).

Residue alanine 1 is a signal peptide.

Belongs to the opacity porin family.

It is found in the cell outer membrane. Its function is as follows. Implicated in a number of adherence functions. OPA proteins are implicated in pathogenesis and are subject to phase variation. The protein is Opacity protein opA57 (opaK) of Neisseria gonorrhoeae.